A 730-amino-acid chain; its full sequence is Ribosomal RNA large subunit methyltransferase K/L (730 aa).

Positions T46–L157 constitute a THUMP domain. The interval E395–R418 is disordered.

This sequence belongs to the methyltransferase superfamily. RlmKL family.

The protein resides in the cytoplasm. The enzyme catalyses guanosine(2445) in 23S rRNA + S-adenosyl-L-methionine = N(2)-methylguanosine(2445) in 23S rRNA + S-adenosyl-L-homocysteine + H(+). The catalysed reaction is guanosine(2069) in 23S rRNA + S-adenosyl-L-methionine = N(2)-methylguanosine(2069) in 23S rRNA + S-adenosyl-L-homocysteine + H(+). In terms of biological role, specifically methylates the guanine in position 2445 (m2G2445) and the guanine in position 2069 (m7G2069) of 23S rRNA. This Pseudomonas putida (strain GB-1) protein is Ribosomal RNA large subunit methyltransferase K/L.